The sequence spans 65 residues: Large ribosomal subunit protein bL35 (65 aa).

This sequence belongs to the bacterial ribosomal protein bL35 family.

The sequence is that of Large ribosomal subunit protein bL35 from Borrelia duttonii (strain Ly).